The sequence spans 79 residues: Cell division protein ZapB (79 aa).

Residues 4–78 (EVFEKLEAKV…LRALLGKMEE (75 aa)) are a coiled coil.

The protein belongs to the ZapB family. Homodimer. The ends of the coiled-coil dimer bind to each other, forming polymers. Interacts with FtsZ.

Its subcellular location is the cytoplasm. Its function is as follows. Non-essential, abundant cell division factor that is required for proper Z-ring formation. It is recruited early to the divisome by direct interaction with FtsZ, stimulating Z-ring assembly and thereby promoting cell division earlier in the cell cycle. Its recruitment to the Z-ring requires functional FtsA or ZipA. The polypeptide is Cell division protein ZapB (Pectobacterium atrosepticum (strain SCRI 1043 / ATCC BAA-672) (Erwinia carotovora subsp. atroseptica)).